The primary structure comprises 259 residues: 5'-nucleotidase SurE (259 aa).

The a divalent metal cation site is built by Asp-8, Asp-9, Ser-39, and Asn-98.

It belongs to the SurE nucleotidase family. The cofactor is a divalent metal cation.

The protein localises to the cytoplasm. The catalysed reaction is a ribonucleoside 5'-phosphate + H2O = a ribonucleoside + phosphate. Its function is as follows. Nucleotidase that shows phosphatase activity on nucleoside 5'-monophosphates. The sequence is that of 5'-nucleotidase SurE from Fervidobacterium nodosum (strain ATCC 35602 / DSM 5306 / Rt17-B1).